The following is a 203-amino-acid chain: Small ribosomal subunit protein uS3 (203 aa).

The protein belongs to the universal ribosomal protein uS3 family. Part of the 30S ribosomal subunit. Forms a tight complex with proteins S10 and S14.

Functionally, binds the lower part of the 30S subunit head. Binds mRNA in the 70S ribosome, positioning it for translation. This chain is Small ribosomal subunit protein uS3, found in Carsonella ruddii (strain PV).